Consider the following 284-residue polypeptide: Hypersensitive-induced response protein 1 (284 aa).

Residue Gly2 is the site of N-myristoyl glycine attachment.

Interacts with LRR1.

It localises to the cell membrane. Its function is as follows. Positive regulator of hypersensitive response (HR)-like cell death. May be involved in potassium ion channel regulation. The chain is Hypersensitive-induced response protein 1 from Oryza sativa subsp. japonica (Rice).